Consider the following 169-residue polypeptide: Inorganic pyrophosphatase (169 aa).

Met-1 is subject to N-formylmethionine. Substrate is bound by residues Lys-28, Arg-42, and Tyr-54. Residues Asp-64, Asp-69, and Asp-101 each contribute to the Mg(2+) site. Position 138 (Tyr-138) interacts with substrate.

The protein belongs to the PPase family. Homohexamer. Mg(2+) serves as cofactor.

It localises to the cytoplasm. The catalysed reaction is diphosphate + H2O = 2 phosphate + H(+). Its activity is regulated as follows. Inhibited by ATP, but not by fructose 1,6-bisphosphate or 2-phosphoglycerate. Functionally, hydrolyzes PPi generated in anabolic reactions. In terms of biological role, catalyzes the hydrolysis of inorganic pyrophosphate (PPi) forming two phosphate ions. This is Inorganic pyrophosphatase from Synechocystis sp. (strain ATCC 27184 / PCC 6803 / Kazusa).